The chain runs to 211 residues: Endonuclease III (211 aa).

One can recognise a HhH domain in the interval 111-130 (AHALESLPGVGHKTANVVLN). [4Fe-4S] cluster-binding residues include C190, C197, C200, and C206.

Belongs to the Nth/MutY family. The cofactor is [4Fe-4S] cluster.

The catalysed reaction is 2'-deoxyribonucleotide-(2'-deoxyribose 5'-phosphate)-2'-deoxyribonucleotide-DNA = a 3'-end 2'-deoxyribonucleotide-(2,3-dehydro-2,3-deoxyribose 5'-phosphate)-DNA + a 5'-end 5'-phospho-2'-deoxyribonucleoside-DNA + H(+). Its function is as follows. DNA repair enzyme that has both DNA N-glycosylase activity and AP-lyase activity. The DNA N-glycosylase activity releases various damaged pyrimidines from DNA by cleaving the N-glycosidic bond, leaving an AP (apurinic/apyrimidinic) site. The AP-lyase activity cleaves the phosphodiester bond 3' to the AP site by a beta-elimination, leaving a 3'-terminal unsaturated sugar and a product with a terminal 5'-phosphate. The protein is Endonuclease III of Treponema pallidum (strain Nichols).